A 554-amino-acid chain; its full sequence is MMHLLFALLLSALPCWVWAQACSDEARAHVSTLAEQIRQWDDSYHRLGQSPVSDELYDQARQRLAQWHQCFPAPTATPNTPLASSRGAQPHPVAHTGLEKLLDEHAVDAWLGTRKDVWIQPKVDGVAVTLVYQQGRLRQVISRGDGVMGHDWSASARKIPGIVQQLPDPIDLVLQGELYWRLDDHVQSASGGLNARSKVAGLMNRKHLGDTDAAGIGLFVWAWPQGPAAFTERLSTLKRWGFTDTQRFSQPIRNISEAAHWRAYWYGHPLPFASDGVVLHQAQHAPAERWQVSTPYWAAAWKYPTTKALALVRDVQFKIGRTGRITPMLELEPVRLDDRQISRVSAGSLKRWQSLDIRPGDHVSISLAGQVIPRLDEVILRSSTRADLPVPNPGKFHALSCWQLDPGCEEQLLARLSWLSGNQGLALPHIGRETWSVLIQAGLIAGFLDWLTLDTAELANIDGFGDRTRARVVDSFHSARQRPFAQWLKALGVPPAARNNLEGDWQTLVARDTQAWLAIDGIGPGRAAQLSAFFRDPHVQALAETLRVAGIDGF.

The N6-AMP-lysine intermediate role is filled by Lys-122.

The protein belongs to the NAD-dependent DNA ligase family. LigB subfamily.

The catalysed reaction is NAD(+) + (deoxyribonucleotide)n-3'-hydroxyl + 5'-phospho-(deoxyribonucleotide)m = (deoxyribonucleotide)n+m + AMP + beta-nicotinamide D-nucleotide.. In terms of biological role, catalyzes the formation of phosphodiester linkages between 5'-phosphoryl and 3'-hydroxyl groups in double-stranded DNA using NAD as a coenzyme and as the energy source for the reaction. This Pseudomonas fluorescens (strain SBW25) protein is DNA ligase B.